The following is a 629-amino-acid chain: Embryonic polyadenylate-binding protein (629 aa).

4 consecutive RRM domains span residues 11–89 (ASLY…WSQR), 99–175 (GNVF…HFKS), 191–268 (TNVY…RAQK), and 294–370 (VNLY…LAQR). Positions 539-616 (QEPLTASSLA…AVAVLQAHQA (78 aa)) constitute a PABC domain.

It belongs to the polyadenylate-binding protein type-1 family. Interacts with dazl in an RNA-independent manner. The C-terminus can self-associate and also interact with the C-terminus of pabpc1, independently of RNA. RRM 1 and RRM 2 interact with both eif4g1 and paip1, and the C-terminus also interacts with paip1. Prior to oocyte maturation, found in a complex with dazl and pum2 proteins and spdy1 mRNA; pum2 dissociates from the complex during maturation. Interacts with the translation termination factor sup35/erf3.

The protein localises to the cytoplasm. In terms of biological role, binds and protects the poly(A) tail of mRNA with or without an AU-rich element (ARE) and prevents mRNA deadenylation. Stimulates the translation of mRNAs to which it is bound during early development. This Xenopus tropicalis (Western clawed frog) protein is Embryonic polyadenylate-binding protein.